The following is a 624-amino-acid chain: Phosphomethylpyrimidine synthase (624 aa).

The disordered stretch occupies residues 75–99 (SPWIESRGDTESYTGRTPFALDDGL). Substrate is bound by residues N226, M255, Y284, H320, 340–342 (SRG), 381–384 (DGLR), and E420. H424 contributes to the Zn(2+) binding site. Y447 contributes to the substrate binding site. Zn(2+) is bound at residue H488. [4Fe-4S] cluster contacts are provided by C568, C571, and C576.

The protein belongs to the ThiC family. In terms of assembly, homodimer. [4Fe-4S] cluster serves as cofactor.

The catalysed reaction is 5-amino-1-(5-phospho-beta-D-ribosyl)imidazole + S-adenosyl-L-methionine = 4-amino-2-methyl-5-(phosphooxymethyl)pyrimidine + CO + 5'-deoxyadenosine + formate + L-methionine + 3 H(+). It participates in cofactor biosynthesis; thiamine diphosphate biosynthesis. Catalyzes the synthesis of the hydroxymethylpyrimidine phosphate (HMP-P) moiety of thiamine from aminoimidazole ribotide (AIR) in a radical S-adenosyl-L-methionine (SAM)-dependent reaction. The sequence is that of Phosphomethylpyrimidine synthase from Albidiferax ferrireducens (strain ATCC BAA-621 / DSM 15236 / T118) (Rhodoferax ferrireducens).